The primary structure comprises 411 residues: Chorismate synthase (411 aa).

The NADP(+) site is built by Arg40 and Arg46. FMN contacts are provided by residues 135–137 and 256–257; these read RAS and QA. Residues 278–299 form a disordered region; it reads HDGIARGADGRPRRTSDRAGGI. Residues 285–294 are compositionally biased toward basic and acidic residues; sequence ADGRPRRTSD. Residues Ala301, 316–320, and Arg342 each bind FMN; that span reads KPIAT.

It belongs to the chorismate synthase family. In terms of assembly, homotetramer. FMNH2 is required as a cofactor.

It catalyses the reaction 5-O-(1-carboxyvinyl)-3-phosphoshikimate = chorismate + phosphate. It participates in metabolic intermediate biosynthesis; chorismate biosynthesis; chorismate from D-erythrose 4-phosphate and phosphoenolpyruvate: step 7/7. In terms of biological role, catalyzes the anti-1,4-elimination of the C-3 phosphate and the C-6 proR hydrogen from 5-enolpyruvylshikimate-3-phosphate (EPSP) to yield chorismate, which is the branch point compound that serves as the starting substrate for the three terminal pathways of aromatic amino acid biosynthesis. This reaction introduces a second double bond into the aromatic ring system. This Micrococcus luteus (strain ATCC 4698 / DSM 20030 / JCM 1464 / CCM 169 / CCUG 5858 / IAM 1056 / NBRC 3333 / NCIMB 9278 / NCTC 2665 / VKM Ac-2230) (Micrococcus lysodeikticus) protein is Chorismate synthase.